Here is a 487-residue protein sequence, read N- to C-terminus: UDP-glucosyl transferase 73CC6 (487 aa).

Catalysis depends on histidine 17, which acts as the Proton acceptor. Aspartate 114 serves as the catalytic Charge relay. UDP-binding residues include serine 282, tryptophan 346, alanine 347, histidine 364, asparagine 368, serine 369, glutamate 372, and tyrosine 386.

The protein belongs to the UDP-glycosyltransferase family. In terms of tissue distribution, mainly expressed in flowers and flower buds and, to a lesser extent, in leaves, stems and roots.

The protein operates within secondary metabolite biosynthesis; terpenoid biosynthesis. Its function is as follows. Component of the oleanane-type triterpene saponins (e.g. saponarioside A and saponarioside B) biosynthetic pathway, leading to the production of natural products with detergent properties used as traditional sources of soap. A glycosyltransferase that mediates the conversion of QA-di to QA-tri via the elongation of the C-3 sugar chain with a D-xylose. The polypeptide is UDP-glucosyl transferase 73CC6 (Saponaria officinalis (Common soapwort)).